The sequence spans 106 residues: UPF0060 membrane protein Rleg2_1018 (106 aa).

Transmembrane regions (helical) follow at residues 4 to 24 (IIYAFAAVFEIGGCFAFWAWL), 30 to 50 (VWWLAPGMVSLALFAWLLTLV), 58 to 78 (TFAAYGGIYIAASLLWLWLVE), and 86 to 106 (DIGGALVCLAGTSIILFGPRG).

Belongs to the UPF0060 family.

Its subcellular location is the cell inner membrane. The sequence is that of UPF0060 membrane protein Rleg2_1018 from Rhizobium leguminosarum bv. trifolii (strain WSM2304).